Consider the following 230-residue polypeptide: Potassium/proton antiporter CemA (230 aa).

A run of 4 helical transmembrane segments spans residues 7-27 (LPSLLYLVFIVLLPWGVSSSF), 107-127 (ILHFSTNIICLAILSGSFFLG), 145-165 (LNDSIKAFFILLVTDFFVGFH), and 181-201 (FGWAPNELIFTIFVCSFPVIL).

This sequence belongs to the CemA family.

It localises to the plastid. It is found in the chloroplast inner membrane. The catalysed reaction is K(+)(in) + H(+)(out) = K(+)(out) + H(+)(in). In terms of biological role, contributes to K(+)/H(+) antiport activity by supporting proton efflux to control proton extrusion and homeostasis in chloroplasts in a light-dependent manner to modulate photosynthesis. Prevents excessive induction of non-photochemical quenching (NPQ) under continuous-light conditions. Indirectly promotes efficient inorganic carbon uptake into chloroplasts. The polypeptide is Potassium/proton antiporter CemA (Triticum aestivum (Wheat)).